We begin with the raw amino-acid sequence, 383 residues long: Serine protease 23 (383 aa).

A signal peptide spans 1–19; sequence MAGIPGLLFLLFLLLCAVG. N-linked (GlcNAc...) asparagine glycosylation occurs at Asn93. Residues 108–127 form a disordered region; the sequence is SSGGGAQHRDSGSSGKSRRK. Ser109 is subject to Phosphoserine; by FAM20C. Cys160 and Cys176 are disulfide-bonded. His175 (charge relay system) is an active-site residue. N-linked (GlcNAc...) asparagine glycosylation is present at Asn207. Active-site charge relay system residues include Asp240 and Ser316.

Belongs to the peptidase S1 family.

Its subcellular location is the secreted. The polypeptide is Serine protease 23 (PRSS23) (Macaca mulatta (Rhesus macaque)).